Consider the following 999-residue polypeptide: Probable beta-galactosidase C (999 aa).

The signal sequence occupies residues 1-21 (MFFFRFLTTVLLLFNAKLLVA). The N-linked (GlcNAc...) asparagine glycan is linked to N25. Residues Y80, N125, E127, and N185 each coordinate substrate. Residue E186 is the Proton donor of the active site. N195 is a glycosylation site (N-linked (GlcNAc...) asparagine). Y249 is a substrate binding site. C255 and C302 are joined by a disulfide. N-linked (GlcNAc...) asparagine glycosylation is present at N274. E285 acts as the Nucleophile in catalysis. Y351 provides a ligand contact to substrate. N-linked (GlcNAc...) asparagine glycans are attached at residues N389, N441, N512, N519, N600, N675, N713, N757, N808, and N897.

It belongs to the glycosyl hydrolase 35 family.

It localises to the secreted. It catalyses the reaction Hydrolysis of terminal non-reducing beta-D-galactose residues in beta-D-galactosides.. In terms of biological role, cleaves beta-linked terminal galactosyl residues from gangliosides, glycoproteins, and glycosaminoglycans. The chain is Probable beta-galactosidase C (lacC) from Talaromyces marneffei (strain ATCC 18224 / CBS 334.59 / QM 7333) (Penicillium marneffei).